Reading from the N-terminus, the 357-residue chain is Homoserine O-acetyltransferase (357 aa).

Residues 51 to 340 enclose the AB hydrolase-1 domain; it reads NVIVICHALT…EPYGHDAFLI (290 aa). The Nucleophile role is filled by S147. A substrate-binding site is contributed by R216. Active-site residues include D306 and H335. Residue D336 coordinates substrate.

This sequence belongs to the AB hydrolase superfamily. MetX family. In terms of assembly, homodimer.

Its subcellular location is the cytoplasm. It catalyses the reaction L-homoserine + acetyl-CoA = O-acetyl-L-homoserine + CoA. It participates in amino-acid biosynthesis; L-methionine biosynthesis via de novo pathway; O-acetyl-L-homoserine from L-homoserine: step 1/1. Transfers an acetyl group from acetyl-CoA to L-homoserine, forming acetyl-L-homoserine. This is Homoserine O-acetyltransferase from Chlorobium chlorochromatii (strain CaD3).